Consider the following 134-residue polypeptide: Salivary protein 15 Iric-1 (134 aa).

Positions 1 to 21 (MESFVAMKVVCITVLFVIVAV) are cleaved as a signal peptide. Asn22 is a glycosylation site (N-linked (GlcNAc...) asparagine). The tract at residues 48 to 67 (PSYIRNPQKLALELLEICKN) is required for Borrelia OspC-binding. 2 N-linked (GlcNAc...) asparagine glycosylation sites follow: Asn91 and Asn103. A CD4-binding region spans residues 115–134 (GPNGETCAEKSKCVGHIPGC).

This sequence belongs to the salp15 family. Monomer. Interacts with host CD4. Interacts with host DC-SIGN (CD209). In terms of assembly, (Microbial infection) Interacts with Borrelia outer surface protein C (OspC). As to expression, expressed in salivary glands. Detected in fed adult female.

The protein localises to the secreted. Its function is as follows. Salivary tick protein that downregulates host immune system by binding to both dendritic cells, and CD4(+) T cells. Specifically binds to the CD4 coreceptor on T cells. This interaction prevents the activation of the Src kinase, Lck, and its downstream substrate Zap-70, and results in deficient activation of PLCgamma1, the repression of calcium fluxes triggered by T-cell antigen receptor (TCR) ligation, and a subsequent reduction in interleukin-2 production. This salivary protein also binds to DC-SIGN (CD209) on dendritic cells (DC) and activates the Raf-1 kinase/MEK signaling pathway that results in down-regulating expression of pro-inflammatory cytokines. Furthermore, it inhibits T cell proliferation induced by DCs. In addition, it inhibits in vitro keratinocyte inflammation induced by Borrelia burgdorferi or by the major outer surface protein (OspC) of Borrelia. In addition, it downregulates chemokines and monocyte chemoattractant protein 1, as well as several antimicrobial peptides such as defensins, cathelicidin, psoriasin, and RNase 7. Apart from its immunomodulatory activities, it is also associated with protection of Borrelia spirochetes from antibody-mediated killing through its binding to OspC. In vivo, tests on different immune disease animal models show promising therapeutic results, e.g., in inhibiting HIV infection, experimental autoimmune encephalomyelitis, transplantation rejection, and asthma. In terms of biological role, (Microbial infection) Protects Borrelia garinii (strain VSBP) from host complement-mediated killing by binding to the surface of spirochetes and preventing deposition of host C5b-9 membrane attack complexes. Protects Borrelia garinii (strain A87S) from host complement-mediated killing. (Microbial infection) Partially protects Borrelia burgdorferi (strains VS215 and B31) from host complement-mediated killing. This Ixodes ricinus (Common tick) protein is Salivary protein 15 Iric-1.